The following is a 233-amino-acid chain: Orotidine 5'-phosphate decarboxylase (233 aa).

Residues aspartate 11, lysine 34, 61–70 (DLKLHDIPNT), threonine 117, arginine 179, glutamine 188, glycine 208, and arginine 209 contribute to the substrate site. The active-site Proton donor is lysine 63.

The protein belongs to the OMP decarboxylase family. Type 1 subfamily. Homodimer.

It carries out the reaction orotidine 5'-phosphate + H(+) = UMP + CO2. The protein operates within pyrimidine metabolism; UMP biosynthesis via de novo pathway; UMP from orotate: step 2/2. Functionally, catalyzes the decarboxylation of orotidine 5'-monophosphate (OMP) to uridine 5'-monophosphate (UMP). This is Orotidine 5'-phosphate decarboxylase from Streptococcus pneumoniae (strain P1031).